The sequence spans 382 residues: tRNA(Met) cytidine acetate ligase (382 aa).

Residues 9–22 (VTEY…HAYQ), Gly-103, Asn-152, and Arg-177 contribute to the ATP site.

It belongs to the TmcAL family.

The protein resides in the cytoplasm. It catalyses the reaction cytidine(34) in elongator tRNA(Met) + acetate + ATP = N(4)-acetylcytidine(34) in elongator tRNA(Met) + AMP + diphosphate. In terms of biological role, catalyzes the formation of N(4)-acetylcytidine (ac(4)C) at the wobble position of elongator tRNA(Met), using acetate and ATP as substrates. First activates an acetate ion to form acetyladenylate (Ac-AMP) and then transfers the acetyl group to tRNA to form ac(4)C34. This is tRNA(Met) cytidine acetate ligase from Levilactobacillus brevis (strain ATCC 367 / BCRC 12310 / CIP 105137 / JCM 1170 / LMG 11437 / NCIMB 947 / NCTC 947) (Lactobacillus brevis).